Here is a 284-residue protein sequence, read N- to C-terminus: Pantothenate synthetase (284 aa).

An ATP-binding site is contributed by 30 to 37 (MGNLHEGH). Catalysis depends on His-37, which acts as the Proton donor. Residue Gln-61 participates in (R)-pantoate binding. Gln-61 is a binding site for beta-alanine. 149 to 152 (GEKD) contacts ATP. A (R)-pantoate-binding site is contributed by Gln-155. Residues Val-178 and 186 to 189 (LSSR) contribute to the ATP site.

The protein belongs to the pantothenate synthetase family. Homodimer.

The protein localises to the cytoplasm. The enzyme catalyses (R)-pantoate + beta-alanine + ATP = (R)-pantothenate + AMP + diphosphate + H(+). It functions in the pathway cofactor biosynthesis; (R)-pantothenate biosynthesis; (R)-pantothenate from (R)-pantoate and beta-alanine: step 1/1. In terms of biological role, catalyzes the condensation of pantoate with beta-alanine in an ATP-dependent reaction via a pantoyl-adenylate intermediate. This chain is Pantothenate synthetase, found in Sodalis glossinidius (strain morsitans).